Reading from the N-terminus, the 607-residue chain is Elongation factor 4 (607 aa).

In terms of domain architecture, tr-type G spans 11–193 (EKIRNFSIIA…QIVEKVPAPT (183 aa)). GTP contacts are provided by residues 23 to 28 (DHGKST) and 140 to 143 (NKID).

This sequence belongs to the TRAFAC class translation factor GTPase superfamily. Classic translation factor GTPase family. LepA subfamily.

The protein resides in the cell membrane. It catalyses the reaction GTP + H2O = GDP + phosphate + H(+). Its function is as follows. Required for accurate and efficient protein synthesis under certain stress conditions. May act as a fidelity factor of the translation reaction, by catalyzing a one-codon backward translocation of tRNAs on improperly translocated ribosomes. Back-translocation proceeds from a post-translocation (POST) complex to a pre-translocation (PRE) complex, thus giving elongation factor G a second chance to translocate the tRNAs correctly. Binds to ribosomes in a GTP-dependent manner. The protein is Elongation factor 4 of Streptococcus pneumoniae (strain P1031).